Here is a 518-residue protein sequence, read N- to C-terminus: Probable cyclic di-GMP phosphodiesterase PdeN (518 aa).

A run of 2 helical transmembrane segments spans residues 16 to 36 and 236 to 256; these read CIVA…LVAW and VWYA…LCYY. The 254-residue stretch at 261 to 514 folds into the EAL domain; sequence RMRPGREIMT…DFVRWLKKPY (254 aa).

The protein localises to the cell inner membrane. The catalysed reaction is 3',3'-c-di-GMP + H2O = 5'-phosphoguanylyl(3'-&gt;5')guanosine + H(+). Functionally, phosphodiesterase (PDE) that catalyzes the hydrolysis of cyclic-di-GMP (c-di-GMP) to 5'-pGpG. The polypeptide is Probable cyclic di-GMP phosphodiesterase PdeN (Escherichia coli (strain K12)).